A 173-amino-acid polypeptide reads, in one-letter code: NADH-quinone oxidoreductase subunit B (173 aa).

[4Fe-4S] cluster is bound by residues Cys-52, Cys-53, Cys-117, and Cys-147.

It belongs to the complex I 20 kDa subunit family. In terms of assembly, NDH-1 is composed of 14 different subunits. Subunits NuoB, C, D, E, F, and G constitute the peripheral sector of the complex. Requires [4Fe-4S] cluster as cofactor.

It is found in the cell inner membrane. It catalyses the reaction a quinone + NADH + 5 H(+)(in) = a quinol + NAD(+) + 4 H(+)(out). Its function is as follows. NDH-1 shuttles electrons from NADH, via FMN and iron-sulfur (Fe-S) centers, to quinones in the respiratory chain. Couples the redox reaction to proton translocation (for every two electrons transferred, four hydrogen ions are translocated across the cytoplasmic membrane), and thus conserves the redox energy in a proton gradient. This is NADH-quinone oxidoreductase subunit B from Pelagibacter ubique (strain HTCC1062).